Here is a 556-residue protein sequence, read N- to C-terminus: Formate--tetrahydrofolate ligase (556 aa).

65-72 (TPAGEGKT) is an ATP binding site.

The protein belongs to the formate--tetrahydrofolate ligase family.

The enzyme catalyses (6S)-5,6,7,8-tetrahydrofolate + formate + ATP = (6R)-10-formyltetrahydrofolate + ADP + phosphate. It participates in one-carbon metabolism; tetrahydrofolate interconversion. The protein is Formate--tetrahydrofolate ligase of Maricaulis maris (strain MCS10) (Caulobacter maris).